The primary structure comprises 432 residues: Negative regulator of systemic acquired resistance SNI1 (432 aa).

As to quaternary structure, interacts with SSN2. Binds to NTL9/CBNAC to promote its binding to promoters of target genes. Component of the SMC5-SMC6 complex which consists at least of SMC5 and SMC6B. Interacts with RAD17. As to expression, expressed at low levels in the veins.

It localises to the nucleus. Its function is as follows. Component of the SMC5-SMC6 complex, a complex involved in repair of DNA double-strand breaks by homologous recombination. Transcription repressor that prevents expression of pathogenesis-related genes (PR) via histone modifications and binding negative cis-acting elements at their promoters. Negative regulator of hypersensitive response (HR) and systemic acquired resistance (SAR) required to dampen the basal expression of pathogenesis related (PR) genes. Functions synergistically with NTL9/CBNAC as negative regulator of pathogen-induced PR1 expression and basal resistance to a virulent strain of P.syringae. Binds to the PR1 gene promoter to suppress defense response in the absence of pathogen challenge and is removed in response to induction. Negatively regulates both gene expression and DNA recombination during pathogen infection, thus being involved in short-term defense response and a long-term survival strategy. Prevents effective immune responses that involve activation of DNA damage responses, probably by negatively regulating the DNA damage sensors RAD17 and ATR. Negative regulator of defenses against the beet cyst nematode H.schachtii. The sequence is that of Negative regulator of systemic acquired resistance SNI1 from Arabidopsis thaliana (Mouse-ear cress).